Reading from the N-terminus, the 825-residue chain is Probable phosphoketolase (825 aa).

It belongs to the XFP family. Thiamine diphosphate is required as a cofactor.

This is Probable phosphoketolase from Schizosaccharomyces pombe (strain 972 / ATCC 24843) (Fission yeast).